We begin with the raw amino-acid sequence, 143 residues long: Large ribosomal subunit protein uL11 (143 aa).

This sequence belongs to the universal ribosomal protein uL11 family. Part of the ribosomal stalk of the 50S ribosomal subunit. Interacts with L10 and the large rRNA to form the base of the stalk. L10 forms an elongated spine to which L12 dimers bind in a sequential fashion forming a multimeric L10(L12)X complex. Post-translationally, one or more lysine residues are methylated.

Forms part of the ribosomal stalk which helps the ribosome interact with GTP-bound translation factors. In Aromatoleum aromaticum (strain DSM 19018 / LMG 30748 / EbN1) (Azoarcus sp. (strain EbN1)), this protein is Large ribosomal subunit protein uL11.